We begin with the raw amino-acid sequence, 358 residues long: ATP synthase gamma chain, chloroplastic (358 aa).

Residues 1-35 constitute a chloroplast transit peptide; the sequence is MAAMLASKQGAFMGRSSFAPAPKGVASRGSLQVVA. Cysteine 123 is an active-site residue. Cysteine 233 and cysteine 239 are joined by a disulfide.

It belongs to the ATPase gamma chain family. F-type ATPases have 2 components, F(1) - the catalytic core - and F(0) - the membrane proton channel. F(1) has five subunits: alpha(3), beta(3), gamma(1), delta(1), epsilon(1). F(0) has four main subunits: a(1), b(1), b'(1) and c(10-14). The alpha and beta chains form an alternating ring which encloses part of the gamma chain. F(1) is attached to F(0) by a central stalk formed by the gamma and epsilon chains, while a peripheral stalk is formed by the delta, b and b' chains.

The protein localises to the plastid. It localises to the chloroplast thylakoid membrane. F(1)F(0) ATP synthase produces ATP from ADP in the presence of a proton or sodium gradient. F-type ATPases consist of two structural domains, F(1) containing the extramembraneous catalytic core and F(0) containing the membrane proton channel, linked together by a central stalk and a peripheral stalk. During catalysis, ATP synthesis in the catalytic domain of F(1) is coupled via a rotary mechanism of the central stalk subunits to proton translocation. Functionally, produces ATP from ADP in the presence of a proton gradient across the membrane. The gamma chain is believed to be important in regulating ATPase activity and the flow of protons through the CF(0) complex. The polypeptide is ATP synthase gamma chain, chloroplastic (Chlamydomonas reinhardtii (Chlamydomonas smithii)).